The primary structure comprises 269 residues: Surfeit locus protein 4 (269 aa).

The next 5 membrane-spanning stretches (helical) occupy residues 64–84 (LLAS…CILV), 92–112 (YACF…SILW), 179–199 (FFSI…AIGF), 203–223 (LAAL…NAFW), and 239–259 (FFQT…GPGG). A Di-lysine motif motif is present at residues 266–269 (KKEW).

Belongs to the SURF4 family. In terms of assembly, found in a complex composed at least of SURF4, TMED2 and TMED10. May interact with LMAN1. Interacts with ZFYVE27 and with KIF5A in a ZFYVE27-dependent manner. Interacts with STING1. Interacts with SAR1B. Interacts with TMEM41B.

It localises to the endoplasmic reticulum membrane. The protein localises to the endoplasmic reticulum-Golgi intermediate compartment membrane. It is found in the golgi apparatus membrane. Endoplasmic reticulum cargo receptor that mediates the export of lipoproteins by recruiting cargos into COPII vesicles to facilitate their secretion. Acts as a cargo receptor for lipoproteins bearing both APOB and APOA1, thereby regulating lipoprotein delivery and the maintenance of lipid homeostasis. Synergizes with the GTPase SAR1B to mediate transport of circulating lipoproteins. Promotes the secretion of PCSK9. Also mediates the efficient secretion of erythropoietin (EPO). May also play a role in the maintenance of the architecture of the endoplasmic reticulum-Golgi intermediate compartment and of the Golgi. In Bos taurus (Bovine), this protein is Surfeit locus protein 4.